Consider the following 269-residue polypeptide: Bis(5'-nucleosyl)-tetraphosphatase, symmetrical (269 aa).

The protein belongs to the Ap4A hydrolase family.

It carries out the reaction P(1),P(4)-bis(5'-adenosyl) tetraphosphate + H2O = 2 ADP + 2 H(+). Hydrolyzes diadenosine 5',5'''-P1,P4-tetraphosphate to yield ADP. This is Bis(5'-nucleosyl)-tetraphosphatase, symmetrical from Vibrio vulnificus (strain YJ016).